The sequence spans 222 residues: Kinetochore protein Spc25 (222 aa).

Residues 51–86 (RHQRKVGKLQKVLMERREELDKRVSFIEELDRELEA) adopt a coiled-coil conformation.

This sequence belongs to the SPC25 family. In terms of assembly, component of the Ndc80 complex, which is composed of Ndc80, Nuf2 and Spc25.

The protein localises to the nucleus. It localises to the chromosome. It is found in the centromere. Its subcellular location is the kinetochore. Its function is as follows. Acts as a component of the essential kinetochore-associated Ndc80 complex, which is required for chromosome segregation and spindle checkpoint activity during meiosis and mitosis. Required for kinetochore integrity and the organization of stable microtubule binding sites in the outer plate of the kinetochore. Participates in SAC signaling that responds specifically to disruptions in spindle microtubule dynamics. The NDC80 complex synergistically enhances the affinity of the SKA1 complex for microtubules and may allow the NDC80 complex to track depolymerizing microtubules. The chain is Kinetochore protein Spc25 from Drosophila melanogaster (Fruit fly).